The chain runs to 473 residues: tRNA-2-methylthio-N(6)-dimethylallyladenosine synthase (473 aa).

A disordered region spans residues 1-21 (MTQDSALLQAPEAIPSESLRD). The MTTase N-terminal domain maps to 26–146 (RKVFIKTYGC…LPEALRRAKQ (121 aa)). Residues C35, C71, C109, C187, C191, and C194 each coordinate [4Fe-4S] cluster. The region spanning 173-405 (RARGVTAFLT…QMLLLKQQQE (233 aa)) is the Radical SAM core domain. A TRAM domain is found at 408 to 470 (ESCVGKEIDL…TNSLFAEHAE (63 aa)).

It belongs to the methylthiotransferase family. MiaB subfamily. Monomer. The cofactor is [4Fe-4S] cluster.

It localises to the cytoplasm. It carries out the reaction N(6)-dimethylallyladenosine(37) in tRNA + (sulfur carrier)-SH + AH2 + 2 S-adenosyl-L-methionine = 2-methylsulfanyl-N(6)-dimethylallyladenosine(37) in tRNA + (sulfur carrier)-H + 5'-deoxyadenosine + L-methionine + A + S-adenosyl-L-homocysteine + 2 H(+). Its function is as follows. Catalyzes the methylthiolation of N6-(dimethylallyl)adenosine (i(6)A), leading to the formation of 2-methylthio-N6-(dimethylallyl)adenosine (ms(2)i(6)A) at position 37 in tRNAs that read codons beginning with uridine. This Rhizobium johnstonii (strain DSM 114642 / LMG 32736 / 3841) (Rhizobium leguminosarum bv. viciae) protein is tRNA-2-methylthio-N(6)-dimethylallyladenosine synthase.